A 1048-amino-acid chain; its full sequence is 3-hydroxy-3-methylglutaryl-coenzyme A reductase (1048 aa).

At 1-32 the chain is on the cytoplasmic side; that stretch reads MDPVVKKPSPGGVQHRVTKGLRAIVGHACRHP. The helical transmembrane segment at 33–53 threads the bilayer; the sequence is IHTLLVTALTAATTHLHVLEG. Residues 54–220 lie on the Lumenal side of the membrane; that stretch reads TYQAAHRGLA…FLHRVKHAET (167 aa). The helical transmembrane segment at 221 to 241 threads the bilayer; the sequence is VDLVIIGLSYLAMNMTVVSLF. Residues 222–403 enclose the SSD domain; it reads DLVIIGLSYL…FTFYATILCV (182 aa). Topologically, residues 242–250 are cytoplasmic; it reads RVMRQLGSR. A helical transmembrane segment spans residues 251–271; that stretch reads FWLATSVLLSGAFAFVLGLGI. The Lumenal segment spans residues 272–276; sequence TTTCD. Residues 277-297 form a helical membrane-spanning segment; it reads VPVDMLLLFEGIPYLVLTVGF. Topologically, residues 298–348 are cytoplasmic; the sequence is EKPIQLTRAVLCVSEELRGGWQRPVPNGASSDDSRQSQLIPNIIQLAVDRE. The helical transmembrane segment at 349 to 369 threads the bilayer; it reads GWYIVRSYLLEIGALALGAVL. The Lumenal portion of the chain corresponds to 370 to 377; it reads RPNDSLGH. N-linked (GlcNAc...) asparagine glycosylation occurs at N372. Residues 378 to 398 traverse the membrane as a helical segment; sequence FCFLAAWTLLIDAILLFTFYA. Over 399 to 439 the chain is Cytoplasmic; that stretch reads TILCVKLEITRIRSPGGLGQVNAKHPSGIFGHKVKSTNITW. A helical transmembrane segment spans residues 440-460; the sequence is WKLLTVGGFVLCHFLQLSPFF. The Lumenal portion of the chain corresponds to 461–542; the sequence is YRVMGEYMAN…LDGLESPLGR (82 aa). N-linked (GlcNAc...) asparagine glycans are attached at residues N470 and N520. The helical transmembrane segment at 543–563 threads the bilayer; sequence LCLMGALVVSLVLNNHLIHAA. Residues 564–1048 lie on the Cytoplasmic side of the membrane; the sequence is RWHAWPQARE…NRSAGATVKK (485 aa). E729 acts as the Charge relay system in catalysis. Position 735–741 (735–741) interacts with CoA; it reads SASRGCK. NADP(+) is bound by residues 796–798 and 823–831; these read SRF and DAMGMNMIS. K863 functions as the Charge relay system in the catalytic mechanism. A CoA-binding site is contributed by 892–894; the sequence is VLK. D939 serves as the catalytic Charge relay system. 1034–1035 contacts CoA; sequence AH. H1035 functions as the Proton donor in the catalytic mechanism. Residue 1039-1040 participates in NADP(+) binding; the sequence is NR.

The protein belongs to the HMG-CoA reductase family.

The protein resides in the endoplasmic reticulum membrane. It carries out the reaction (R)-mevalonate + 2 NADP(+) + CoA = (3S)-3-hydroxy-3-methylglutaryl-CoA + 2 NADPH + 2 H(+). Its pathway is metabolic intermediate biosynthesis; (R)-mevalonate biosynthesis; (R)-mevalonate from acetyl-CoA: step 3/3. Functionally, HMG-CoA reductase; part of the first module of ergosterol biosynthesis pathway that includes the early steps of the pathway, conserved across all eukaryotes, and which results in the formation of mevalonate from acetyl-coenzyme A (acetyl-CoA). In this module, the cytosolic acetyl-CoA acetyltransferase catalyzes the formation of acetoacetyl-CoA. The hydroxymethylglutaryl-CoA synthase then condenses acetyl-CoA with acetoacetyl-CoA to form HMG-CoA. The rate-limiting step of the early module is the reduction to mevalonate by the 3-hydroxy-3-methylglutaryl-coenzyme A (HMG-CoA) reductase. This is 3-hydroxy-3-methylglutaryl-coenzyme A reductase from Aspergillus terreus (strain NIH 2624 / FGSC A1156).